Here is a 339-residue protein sequence, read N- to C-terminus: Protein FAM76B (339 aa).

The residue at position 2 (alanine 2) is an N-acetylalanine. 2 positions are modified to phosphoserine: serine 22 and serine 148. The tract at residues 144–243 (EQRKSLGSSH…INQSADSGGT (100 aa)) is disordered. Positions 148–160 (SLGSSHSNSSSSS) are enriched in low complexity. Basic residues predominate over residues 167–189 (HHSKHHHHHHHHHHRHSSGHHKV). At serine 193 the chain carries Phosphoserine. Threonine 215 is modified (phosphothreonine). Residues 215-224 (TPKKKPKLES) are compositionally biased toward basic and acidic residues. Over residues 228–243 (NGDSSSINQSADSGGT) the composition is skewed to polar residues. Residues 248–328 (LISQLKEEVM…QVAALSKGKK (81 aa)) adopt a coiled-coil conformation.

It belongs to the FAM76 family. Interacts with HNRNPA2B1 (via C-terminus); the interaction results in retention of HNRNPA2B1 in the nucleus and inhibition of the NF-kappa-B-mediated inflammatory pathway.

The protein localises to the nucleus speckle. Its function is as follows. Negatively regulates the NF-kappa-B-mediated inflammatory pathway by preventing the translocation of HNRNPA2B1 from the nucleus to the cytoplasm. Inhibits the PI3K/Akt/NF-kappa-B pathway-mediated polarization of M1 macrophages by binding to and stabilizing PIK3CD mRNA, resulting in increased levels of PIK3CD protein and increased levels of phosphorylated downstream target AKT which leads to decreased NF-kappa-B signaling. The polypeptide is Protein FAM76B (Fam76b) (Mus musculus (Mouse)).